The following is a 264-amino-acid chain: tRNA (guanine-N(1)-)-methyltransferase (264 aa).

Residues glycine 125 and 145-150 (LGDFVL) contribute to the S-adenosyl-L-methionine site.

Belongs to the RNA methyltransferase TrmD family. As to quaternary structure, homodimer.

The protein resides in the cytoplasm. The enzyme catalyses guanosine(37) in tRNA + S-adenosyl-L-methionine = N(1)-methylguanosine(37) in tRNA + S-adenosyl-L-homocysteine + H(+). Functionally, specifically methylates guanosine-37 in various tRNAs. The chain is tRNA (guanine-N(1)-)-methyltransferase from Burkholderia ambifaria (strain ATCC BAA-244 / DSM 16087 / CCUG 44356 / LMG 19182 / AMMD) (Burkholderia cepacia (strain AMMD)).